Reading from the N-terminus, the 200-residue chain is High frequency lysogenization protein HflD homolog (200 aa).

Belongs to the HflD family.

The protein resides in the cytoplasm. Its subcellular location is the cell inner membrane. In Pseudoalteromonas translucida (strain TAC 125), this protein is High frequency lysogenization protein HflD homolog.